A 507-amino-acid polypeptide reads, in one-letter code: Cytochrome P450 71A4 (507 aa).

Residues 3–23 (VPCLWYSLLILLLLFIFLLIH) traverse the membrane as a helical segment. C448 provides a ligand contact to heme.

It belongs to the cytochrome P450 family. Heme serves as cofactor.

The protein resides in the membrane. Functionally, may have a role in maturation, such as during flavor formation or other metabolite production specific to aging tissues. The sequence is that of Cytochrome P450 71A4 (CYP71A4) from Solanum melongena (Eggplant).